Here is a 245-residue protein sequence, read N- to C-terminus: Alanyl-tRNA editing protein AlaX-M (245 aa).

Zn(2+) is bound by residues H107, H111, C210, and H214.

It belongs to the class-II aminoacyl-tRNA synthetase family. Editing domain AlaX-M subfamily. Zn(2+) is required as a cofactor.

Its subcellular location is the cytoplasm. Functions in trans to edit the amino acid moiety from mischarged charged tRNA(Ala). In Methanosarcina acetivorans (strain ATCC 35395 / DSM 2834 / JCM 12185 / C2A), this protein is Alanyl-tRNA editing protein AlaX-M (alaXM).